We begin with the raw amino-acid sequence, 453 residues long: 3-phosphoshikimate 1-carboxyvinyltransferase (453 aa).

Residues M1–D27 are disordered. K28, S29, and R33 together coordinate 3-phosphoshikimate. K28 serves as a coordination point for phosphoenolpyruvate. Phosphoenolpyruvate contacts are provided by G101 and R129. 3-phosphoshikimate-binding residues include S175, Q177, D330, and K357. Q177 contributes to the phosphoenolpyruvate binding site. The active-site Proton acceptor is D330. Phosphoenolpyruvate-binding residues include R361 and R405.

It belongs to the EPSP synthase family. In terms of assembly, monomer.

Its subcellular location is the cytoplasm. The catalysed reaction is 3-phosphoshikimate + phosphoenolpyruvate = 5-O-(1-carboxyvinyl)-3-phosphoshikimate + phosphate. The protein operates within metabolic intermediate biosynthesis; chorismate biosynthesis; chorismate from D-erythrose 4-phosphate and phosphoenolpyruvate: step 6/7. Functionally, catalyzes the transfer of the enolpyruvyl moiety of phosphoenolpyruvate (PEP) to the 5-hydroxyl of shikimate-3-phosphate (S3P) to produce enolpyruvyl shikimate-3-phosphate and inorganic phosphate. The sequence is that of 3-phosphoshikimate 1-carboxyvinyltransferase from Methylorubrum extorquens (strain CM4 / NCIMB 13688) (Methylobacterium extorquens).